We begin with the raw amino-acid sequence, 29 residues long: Dermaseptin-1 (29 aa).

Val-29 carries the post-translational modification Valine amide.

In terms of tissue distribution, expressed by the skin glands.

Its subcellular location is the secreted. Antimicrobial peptide, active against the Gram-positive bacterium S.aureus, the Gram-negative bacteria E.coli and P.aeruginosa, and the yeasts C.albicans and P.brasiliensis. Has hemolytic activity (40% hemolysis at 128 ug/ml). The sequence is that of Dermaseptin-1 from Phyllomedusa tarsius (Brownbelly leaf frog).